A 233-amino-acid chain; its full sequence is Uridylate kinase (233 aa).

ATP contacts are provided by residues 8 to 11, G51, and R55; that span reads KLSG. UMP is bound by residues D68 and 129 to 136; that span reads TSNPFFTT. Positions 156, 162, and 165 each coordinate ATP.

It belongs to the UMP kinase family. Homohexamer.

Its subcellular location is the cytoplasm. The catalysed reaction is UMP + ATP = UDP + ADP. It participates in pyrimidine metabolism; CTP biosynthesis via de novo pathway; UDP from UMP (UMPK route): step 1/1. With respect to regulation, inhibited by UTP. Functionally, catalyzes the reversible phosphorylation of UMP to UDP. This chain is Uridylate kinase, found in Thermosipho melanesiensis (strain DSM 12029 / CIP 104789 / BI429).